Reading from the N-terminus, the 623-residue chain is NAD-dependent malic enzyme, mitochondrial (623 aa).

The transit peptide at 1–31 directs the protein to the mitochondrion; sequence MLVLCSRSRLTSSLIRRLKDQIANVSNHRSF. Fumarate-binding residues include arginine 88 and arginine 122. Catalysis depends on serine 143, which acts as the Proton donor. Arginine 196 provides a ligand contact to (S)-malate. Arginine 196 provides a ligand contact to NAD(+). The active-site Proton acceptor is lysine 214. 2 residues coordinate a divalent metal cation: glutamate 285 and aspartate 286. NAD(+) is bound at residue asparagine 289. Aspartate 309 serves as a coordination point for a divalent metal cation. Residue alanine 345 coordinates NAD(+). (S)-malate-binding residues include asparagine 464 and asparagine 509.

The protein belongs to the malic enzymes family. Heterodimer of two related subunits. The cofactor is Mg(2+). Requires Mn(2+) as cofactor.

The protein localises to the mitochondrion matrix. It carries out the reaction (S)-malate + NAD(+) = pyruvate + CO2 + NADH. It functions in the pathway photosynthesis; C4 acid pathway. This Amaranthus hypochondriacus (Prince-of-Wales feather) protein is NAD-dependent malic enzyme, mitochondrial.